A 1343-amino-acid chain; its full sequence is Protein cordon-bleu (1343 aa).

6 disordered regions span residues Met1 to Lys51, Lys301 to Glu479, Val522 to Glu613, Ile733 to Leu808, Glu1056 to Asp1077, and Ile1105 to Gly1148. The span at Ala20–Ala30 shows a compositional bias: pro residues. The KKRRAP 1 motif lies at Lys305–Pro310. The span at Ser324 to Asn335 shows a compositional bias: polar residues. The KKRRAP 2 signature appears at Lys338 to Pro343. A compositionally biased stretch (pro residues) spans Pro343 to Pro354. A compositionally biased stretch (basic and acidic residues) spans Asp390 to Pro400. Residues Ser406–Ser422 show a composition bias toward low complexity. Residues Pro445–Ser460 are compositionally biased toward basic and acidic residues. A compositionally biased stretch (polar residues) spans Glu552 to Val573. The span at Pro746–Glu757 shows a compositional bias: basic and acidic residues. The span at Val773–Phe789 shows a compositional bias: polar residues. Polar residues predominate over residues Ile1105–Thr1122. Over residues Lys1128–Ile1137 the composition is skewed to basic and acidic residues. WH2 domains are found at residues Ile1167–Val1187 and Glu1207–Thr1227. The tract at residues Asn1246–Ala1297 is disordered. A compositionally biased stretch (pro residues) spans Phe1261–Gly1292. Positions Ala1297–Val1317 constitute a WH2 3 domain.

Interacts with pacsin1.

It is found in the cell membrane. The protein localises to the cytoplasm. Its subcellular location is the cytoskeleton. It localises to the cell projection. The protein resides in the ruffle. It is found in the cytosol. Functionally, plays an important role in the reorganization of the actin cytoskeleton. Binds to and sequesters actin monomers (G actin). Nucleates actin polymerization by assembling three actin monomers in cross-filament orientation and thereby promotes growth of actin filaments at the barbed end. Can also mediate actin depolymerization at barbed ends and severing of actin filaments. Promotes formation of cell ruffles. Regulates neuron morphogenesis and increases branching of axons and dendrites. Required for normal embryonic development, including normal development of laterality, normal body size and shape, as well as normal brain, heart and kidney development. Required for normal development of stereocilia and kinocilia in sensory hair cells of neuromasts in the posterior lateral line organ, and thus also for balance keeping and normal swimming behavior. The chain is Protein cordon-bleu (cobl) from Danio rerio (Zebrafish).